Consider the following 566-residue polypeptide: Arginine--tRNA ligase (566 aa).

The 'HIGH' region signature appears at 123–133; that stretch reads PNIAKPFHIGH.

The protein belongs to the class-I aminoacyl-tRNA synthetase family. In terms of assembly, monomer.

The protein localises to the cytoplasm. The catalysed reaction is tRNA(Arg) + L-arginine + ATP = L-arginyl-tRNA(Arg) + AMP + diphosphate. In Clostridioides difficile (strain 630) (Peptoclostridium difficile), this protein is Arginine--tRNA ligase.